A 275-amino-acid chain; its full sequence is Undecaprenyl-diphosphatase (275 aa).

Helical transmembrane passes span 1 to 21, 42 to 62, 80 to 100, 107 to 127, 147 to 167, 184 to 204, 214 to 234, and 249 to 269; these read MDWV…FLPI, VKDA…LVYY, TLWT…LAFG, LFKP…MWLI, SLLI…SRSA, TKFS…LNLV, IGLL…YLAI, and FAVY…TGVM.

The protein belongs to the UppP family.

The protein localises to the cell membrane. The catalysed reaction is di-trans,octa-cis-undecaprenyl diphosphate + H2O = di-trans,octa-cis-undecaprenyl phosphate + phosphate + H(+). Its function is as follows. Catalyzes the dephosphorylation of undecaprenyl diphosphate (UPP). Confers resistance to bacitracin. In Deinococcus deserti (strain DSM 17065 / CIP 109153 / LMG 22923 / VCD115), this protein is Undecaprenyl-diphosphatase.